We begin with the raw amino-acid sequence, 211 residues long: Uridine kinase (211 aa).

12–19 (GGTGSGKT) is a binding site for ATP.

Belongs to the uridine kinase family.

The protein resides in the cytoplasm. The catalysed reaction is uridine + ATP = UMP + ADP + H(+). It carries out the reaction cytidine + ATP = CMP + ADP + H(+). Its pathway is pyrimidine metabolism; CTP biosynthesis via salvage pathway; CTP from cytidine: step 1/3. It participates in pyrimidine metabolism; UMP biosynthesis via salvage pathway; UMP from uridine: step 1/1. The sequence is that of Uridine kinase from Halalkalibacterium halodurans (strain ATCC BAA-125 / DSM 18197 / FERM 7344 / JCM 9153 / C-125) (Bacillus halodurans).